Consider the following 214-residue polypeptide: Octanoyltransferase (214 aa).

The BPL/LPL catalytic domain maps to 36–214 (GRESEMVWLL…QQKFDTIFLQ (179 aa)). Substrate contacts are provided by residues 75–82 (RGGKYSYH), 147–149 (AFG), and 160–162 (GFS). Cysteine 178 serves as the catalytic Acyl-thioester intermediate.

Belongs to the LipB family.

The protein localises to the cytoplasm. It carries out the reaction octanoyl-[ACP] + L-lysyl-[protein] = N(6)-octanoyl-L-lysyl-[protein] + holo-[ACP] + H(+). The protein operates within protein modification; protein lipoylation via endogenous pathway; protein N(6)-(lipoyl)lysine from octanoyl-[acyl-carrier-protein]: step 1/2. In terms of biological role, catalyzes the transfer of endogenously produced octanoic acid from octanoyl-acyl-carrier-protein onto the lipoyl domains of lipoate-dependent enzymes. Lipoyl-ACP can also act as a substrate although octanoyl-ACP is likely to be the physiological substrate. The sequence is that of Octanoyltransferase from Anaplasma marginale (strain Florida).